A 261-amino-acid chain; its full sequence is Ribonuclease HII (261 aa).

Residues 71–259 (QYIAGVDEVG…VKEAKLHFES (189 aa)) form the RNase H type-2 domain. Residues D77, E78, and D169 each coordinate a divalent metal cation.

The protein belongs to the RNase HII family. The cofactor is Mn(2+). It depends on Mg(2+) as a cofactor.

It is found in the cytoplasm. The catalysed reaction is Endonucleolytic cleavage to 5'-phosphomonoester.. Functionally, endonuclease that specifically degrades the RNA of RNA-DNA hybrids. This Listeria innocua serovar 6a (strain ATCC BAA-680 / CLIP 11262) protein is Ribonuclease HII.